The sequence spans 570 residues: Protein NRT1/ PTR FAMILY 8.1 (570 aa).

The residue at position 98 (threonine 98) is a Phosphothreonine. 10 helical membrane-spanning segments follow: residues 99 to 119 (IATFVFIYVSGMTLLTLSASV), 140 to 160 (AVFFVALYMIALGTGGIKPCV), 182 to 202 (FFNWFYFSINVGALIAATVLV), 210 to 230 (WGWGFGVPTVAMVIAVCFFFF), 329 to 349 (IITLLPVWATGIVFATVYSQM), 377 to 397 (LFDTVSVLFWTPVYDQFIIPL), 414 to 434 (MGIGLVVSIFAMITAGVLEVV), 454 to 474 (IFWQIPQYLLIGCAEVFTFIG), 494 to 514 (LSLTTVALGNYLSTVLVTVVM), and 537 to 557 (YFFYLLATLSFLNFLVYLWIS).

It belongs to the major facilitator superfamily. Proton-dependent oligopeptide transporter (POT/PTR) (TC 2.A.17) family. In terms of tissue distribution, expressed in cotyledons, hypocotyls, leaves, roots, flowers, pistils and vascular tissue of sepals, anthers, carpels and funiculi. Not detected in seeds.

The protein resides in the cell membrane. Its function is as follows. Peptide transporter. Mediates the transport of di- and tripeptides. High affinity transporter with low selectivity. No transport of amino acids. This Arabidopsis thaliana (Mouse-ear cress) protein is Protein NRT1/ PTR FAMILY 8.1 (NPF8.1).